The following is a 571-amino-acid chain: Potassium-transporting ATPase potassium-binding subunit (571 aa).

Transmembrane regions (helical) follow at residues 5–25 (LAAGLQVAFVLAVLAVAYVPV), 60–80 (YGYAGSVLGFSTASVLFLYAL), 86–106 (VLPLSGDLSGVSPAVAFNTAV), 131–151 (GLAVQNFVSAAVGMAVAVALI), 177–197 (ILLPFSFVIALILLSQGVIQS), 247–267 (PTPVSNIVEILAILLIPVSLT), 291–311 (LTLLAVMGILWGSLLAVTLAA), 334–354 (FGIPGTALFAVSTTGTSTGAV), 386–406 (GLYGILVLALIAVFVGGLLVG), 425–445 (ALSVLVMPALVLIGTGITVIL), 498–518 (ALGLCMLFGRFLPIIFVLALA), and 547–567 (GTVVLVAALTFFPALALGPIA).

It belongs to the KdpA family. In terms of assembly, the system is composed of three essential subunits: KdpA, KdpB and KdpC.

Its subcellular location is the cell membrane. Part of the high-affinity ATP-driven potassium transport (or Kdp) system, which catalyzes the hydrolysis of ATP coupled with the electrogenic transport of potassium into the cytoplasm. This subunit binds the extracellular potassium ions and delivers the ions to the membrane domain of KdpB through an intramembrane tunnel. The sequence is that of Potassium-transporting ATPase potassium-binding subunit from Rhodococcus jostii (strain RHA1).